The following is a 195-amino-acid chain: Molybdenum cofactor guanylyltransferase (195 aa).

Residues 10 to 12, lysine 23, asparagine 51, aspartate 69, and aspartate 99 each bind GTP; that span reads LAG. Position 99 (aspartate 99) interacts with Mg(2+).

It belongs to the MobA family. In terms of assembly, monomer. Requires Mg(2+) as cofactor.

The protein localises to the cytoplasm. It carries out the reaction Mo-molybdopterin + GTP + H(+) = Mo-molybdopterin guanine dinucleotide + diphosphate. Transfers a GMP moiety from GTP to Mo-molybdopterin (Mo-MPT) cofactor (Moco or molybdenum cofactor) to form Mo-molybdopterin guanine dinucleotide (Mo-MGD) cofactor. This chain is Molybdenum cofactor guanylyltransferase, found in Histophilus somni (strain 2336) (Haemophilus somnus).